Reading from the N-terminus, the 722-residue chain is Polyribonucleotide nucleotidyltransferase (722 aa).

Positions 487 and 493 each coordinate Mg(2+). Residues 554-613 (PRIETFKIPTDKIREVIGTGGKVIREIVEKTGAKVNIEDDGTVKVASSDGESIKAAIKWI) form the KH domain. An S1 motif domain is found at 623–691 (GEIYEGTVVK…DRGKTRLSMK (69 aa)). The interval 691 to 722 (KVVDQDTGEDLEAKQKAEAKAEDEAPAQAAGE) is disordered. The span at 701–713 (LEAKQKAEAKAED) shows a compositional bias: basic and acidic residues.

It belongs to the polyribonucleotide nucleotidyltransferase family. Mg(2+) serves as cofactor.

It is found in the cytoplasm. The catalysed reaction is RNA(n+1) + phosphate = RNA(n) + a ribonucleoside 5'-diphosphate. In terms of biological role, involved in mRNA degradation. Catalyzes the phosphorolysis of single-stranded polyribonucleotides processively in the 3'- to 5'-direction. This is Polyribonucleotide nucleotidyltransferase from Rhodopseudomonas palustris (strain BisB5).